A 148-amino-acid polypeptide reads, in one-letter code: MRVLLQRVKQASVEIDGNVNGEIGQGLLLLVGFTENDGDKEIEYLARKVLNARIFSDADDKMNLSLQQVSGSILSISQFTLYAQTRKGNRPSFTRAQNPDIASKNYDKFNEKLRESGVQVETGIFGADMQVSLVNDGPVTIMYDTDEE.

The short motif at 137–138 (GP) is the Gly-cisPro motif, important for rejection of L-amino acids element.

This sequence belongs to the DTD family. As to quaternary structure, homodimer.

Its subcellular location is the cytoplasm. The enzyme catalyses glycyl-tRNA(Ala) + H2O = tRNA(Ala) + glycine + H(+). It carries out the reaction a D-aminoacyl-tRNA + H2O = a tRNA + a D-alpha-amino acid + H(+). Its function is as follows. An aminoacyl-tRNA editing enzyme that deacylates mischarged D-aminoacyl-tRNAs. Also deacylates mischarged glycyl-tRNA(Ala), protecting cells against glycine mischarging by AlaRS. Acts via tRNA-based rather than protein-based catalysis; rejects L-amino acids rather than detecting D-amino acids in the active site. By recycling D-aminoacyl-tRNA to D-amino acids and free tRNA molecules, this enzyme counteracts the toxicity associated with the formation of D-aminoacyl-tRNA entities in vivo and helps enforce protein L-homochirality. The protein is D-aminoacyl-tRNA deacylase of Ligilactobacillus salivarius (strain UCC118) (Lactobacillus salivarius).